Reading from the N-terminus, the 892-residue chain is Alanine--tRNA ligase (892 aa).

Zn(2+) is bound by residues His-594, His-598, Cys-702, and His-706.

This sequence belongs to the class-II aminoacyl-tRNA synthetase family. The cofactor is Zn(2+).

The protein resides in the cytoplasm. The enzyme catalyses tRNA(Ala) + L-alanine + ATP = L-alanyl-tRNA(Ala) + AMP + diphosphate. In terms of biological role, catalyzes the attachment of alanine to tRNA(Ala) in a two-step reaction: alanine is first activated by ATP to form Ala-AMP and then transferred to the acceptor end of tRNA(Ala). Also edits incorrectly charged Ser-tRNA(Ala) and Gly-tRNA(Ala) via its editing domain. This Pyrobaculum arsenaticum (strain DSM 13514 / JCM 11321 / PZ6) protein is Alanine--tRNA ligase.